A 206-amino-acid polypeptide reads, in one-letter code: Uridine kinase (206 aa).

11–18 is a binding site for ATP; it reads GGTGSGKS.

Belongs to the uridine kinase family.

It is found in the cytoplasm. The catalysed reaction is uridine + ATP = UMP + ADP + H(+). It carries out the reaction cytidine + ATP = CMP + ADP + H(+). Its pathway is pyrimidine metabolism; CTP biosynthesis via salvage pathway; CTP from cytidine: step 1/3. The protein operates within pyrimidine metabolism; UMP biosynthesis via salvage pathway; UMP from uridine: step 1/1. This chain is Uridine kinase, found in Clostridium botulinum (strain 657 / Type Ba4).